The primary structure comprises 860 residues: Leucine--tRNA ligase (860 aa).

Positions 42-52 match the 'HIGH' region motif; sequence PYPSGRLHMGH. The 'KMSKS' region motif lies at 619–623; the sequence is KMSKS. K622 is an ATP binding site.

It belongs to the class-I aminoacyl-tRNA synthetase family.

Its subcellular location is the cytoplasm. The enzyme catalyses tRNA(Leu) + L-leucine + ATP = L-leucyl-tRNA(Leu) + AMP + diphosphate. This chain is Leucine--tRNA ligase, found in Proteus mirabilis (strain HI4320).